Consider the following 428-residue polypeptide: Gamma-glutamyl phosphate reductase (428 aa).

The protein belongs to the gamma-glutamyl phosphate reductase family.

Its subcellular location is the cytoplasm. The catalysed reaction is L-glutamate 5-semialdehyde + phosphate + NADP(+) = L-glutamyl 5-phosphate + NADPH + H(+). The protein operates within amino-acid biosynthesis; L-proline biosynthesis; L-glutamate 5-semialdehyde from L-glutamate: step 2/2. Catalyzes the NADPH-dependent reduction of L-glutamate 5-phosphate into L-glutamate 5-semialdehyde and phosphate. The product spontaneously undergoes cyclization to form 1-pyrroline-5-carboxylate. This Streptomyces avermitilis (strain ATCC 31267 / DSM 46492 / JCM 5070 / NBRC 14893 / NCIMB 12804 / NRRL 8165 / MA-4680) protein is Gamma-glutamyl phosphate reductase.